Here is a 305-residue protein sequence, read N- to C-terminus: tRNA-cytidine(32) 2-sulfurtransferase (305 aa).

Positions 1 to 20 (MTAVLPLPQPLADPAPRDPR) are disordered. The PP-loop motif signature appears at 59–64 (SGGKDS). [4Fe-4S] cluster contacts are provided by C134, C137, and C225. A disordered region spans residues 282–305 (DAPSGLDPDPRAWLSAGHATHDSD).

The protein belongs to the TtcA family. Homodimer. Mg(2+) serves as cofactor. [4Fe-4S] cluster is required as a cofactor.

It is found in the cytoplasm. It carries out the reaction cytidine(32) in tRNA + S-sulfanyl-L-cysteinyl-[cysteine desulfurase] + AH2 + ATP = 2-thiocytidine(32) in tRNA + L-cysteinyl-[cysteine desulfurase] + A + AMP + diphosphate + H(+). Its pathway is tRNA modification. Its function is as follows. Catalyzes the ATP-dependent 2-thiolation of cytidine in position 32 of tRNA, to form 2-thiocytidine (s(2)C32). The sulfur atoms are provided by the cysteine/cysteine desulfurase (IscS) system. This is tRNA-cytidine(32) 2-sulfurtransferase from Xanthomonas axonopodis pv. citri (strain 306).